Reading from the N-terminus, the 500-residue chain is Aspartyl/glutamyl-tRNA(Asn/Gln) amidotransferase subunit B (500 aa).

This sequence belongs to the GatB/GatE family. GatB subfamily. As to quaternary structure, heterotrimer of A, B and C subunits.

The enzyme catalyses L-glutamyl-tRNA(Gln) + L-glutamine + ATP + H2O = L-glutaminyl-tRNA(Gln) + L-glutamate + ADP + phosphate + H(+). It catalyses the reaction L-aspartyl-tRNA(Asn) + L-glutamine + ATP + H2O = L-asparaginyl-tRNA(Asn) + L-glutamate + ADP + phosphate + 2 H(+). Functionally, allows the formation of correctly charged Asn-tRNA(Asn) or Gln-tRNA(Gln) through the transamidation of misacylated Asp-tRNA(Asn) or Glu-tRNA(Gln) in organisms which lack either or both of asparaginyl-tRNA or glutaminyl-tRNA synthetases. The reaction takes place in the presence of glutamine and ATP through an activated phospho-Asp-tRNA(Asn) or phospho-Glu-tRNA(Gln). In Sinorhizobium fredii (strain NBRC 101917 / NGR234), this protein is Aspartyl/glutamyl-tRNA(Asn/Gln) amidotransferase subunit B.